A 213-amino-acid chain; its full sequence is Uridine kinase (213 aa).

Residue 14-21 coordinates ATP; the sequence is GASASGKS.

It belongs to the uridine kinase family.

It is found in the cytoplasm. It carries out the reaction uridine + ATP = UMP + ADP + H(+). The enzyme catalyses cytidine + ATP = CMP + ADP + H(+). It participates in pyrimidine metabolism; CTP biosynthesis via salvage pathway; CTP from cytidine: step 1/3. The protein operates within pyrimidine metabolism; UMP biosynthesis via salvage pathway; UMP from uridine: step 1/1. The polypeptide is Uridine kinase (Vibrio vulnificus (strain CMCP6)).